Here is an 85-residue protein sequence, read N- to C-terminus: PLGGKRAAPDLDVRKCLPCGPGGKGRCFGPNICCAEELGCFVGTAEALRCQEENYLPSPCQSGQKACGSGGRCAVFGLCCSPDGC.

Glycine 3 bears the Glycine amide mark. 6 disulfides stabilise this stretch: cysteine 16–cysteine 60, cysteine 19–cysteine 33, cysteine 27–cysteine 50, cysteine 34–cysteine 40, cysteine 67–cysteine 79, and cysteine 80–cysteine 85.

This sequence belongs to the vasopressin/oxytocin family. Interacts with oxytocin receptor (Ki=1.5 nM). Interacts with vasopressin V1aR/AVPR1A (Ki=37 nM), V1bR/AVPR1B (Ki=222 nM), and V2R/AVPR2 receptors (Ki=823 nM).

Its function is as follows. Neurophysin 1 specifically binds oxytocin. Functionally, oxytocin causes contraction of the smooth muscle of the uterus and of the mammary gland. Acts by binding to oxytocin receptor (OXTR). The protein is Oxytocin-neurophysin 1 (OXT) of Papio hamadryas (Hamadryas baboon).